Here is a 363-residue protein sequence, read N- to C-terminus: 3-isopropylmalate dehydrogenase (363 aa).

An NAD(+)-binding site is contributed by 78-91 (GPKWEHLPPDQQPE). The substrate site is built by Arg99, Arg109, Arg138, and Asp227. 3 residues coordinate Mg(2+): Asp227, Asp251, and Asp255. NAD(+) is bound at residue 285-297 (GSAPDIAGKNIAN).

It belongs to the isocitrate and isopropylmalate dehydrogenases family. LeuB type 1 subfamily. Homodimer. Mg(2+) is required as a cofactor. It depends on Mn(2+) as a cofactor.

The protein resides in the cytoplasm. The catalysed reaction is (2R,3S)-3-isopropylmalate + NAD(+) = 4-methyl-2-oxopentanoate + CO2 + NADH. It participates in amino-acid biosynthesis; L-leucine biosynthesis; L-leucine from 3-methyl-2-oxobutanoate: step 3/4. Functionally, catalyzes the oxidation of 3-carboxy-2-hydroxy-4-methylpentanoate (3-isopropylmalate) to 3-carboxy-4-methyl-2-oxopentanoate. The product decarboxylates to 4-methyl-2 oxopentanoate. This Shigella flexneri protein is 3-isopropylmalate dehydrogenase.